The following is a 333-amino-acid chain: Tetraacyldisaccharide 4'-kinase (333 aa).

ATP is bound at residue 55–62 (TAGGNGKT).

It belongs to the LpxK family.

The enzyme catalyses a lipid A disaccharide + ATP = a lipid IVA + ADP + H(+). It participates in glycolipid biosynthesis; lipid IV(A) biosynthesis; lipid IV(A) from (3R)-3-hydroxytetradecanoyl-[acyl-carrier-protein] and UDP-N-acetyl-alpha-D-glucosamine: step 6/6. Transfers the gamma-phosphate of ATP to the 4'-position of a tetraacyldisaccharide 1-phosphate intermediate (termed DS-1-P) to form tetraacyldisaccharide 1,4'-bis-phosphate (lipid IVA). In Proteus mirabilis (strain HI4320), this protein is Tetraacyldisaccharide 4'-kinase.